The primary structure comprises 805 residues: MAYDHKAIEKKWQRYWKQHKTFKATLDKDQKKYYALDMFPYPSGQGLHVGHPEGYTATDVMSRLKRMQGFNVLHPMGWDAFGLPAEQYALKTGHNPADFTNQNVDHFRDQIQSLGFSYDWDREVNTTDPNYYKWTQWIFEQLYKKGLAYEDEIMVNWAPDFMGGTVVANEEVVDGKTERGGYPVYRVPMRQWVLKITAYADRLIDDLDLVDWPESVKEMQRNWIGRSEGASVKFKVVGHDGVEIEVFTTRADTLFGASYVVLAPENELVDQLTTPEQKAAVDAYKEEVSRRSDLERTELSKEKTGVFTGAYVINPVNGEQLPIWTADYVLNSYGTGAVMAVPSGDQRDFEFATKFNLPITPVVEGFNGEEAYTEDGAHVNSGFLDGLNIKEAKAKMVEWLEEHDCGGKKVNYRLRDWIFSRQRYWGEPIPVIHWDDGTTSLVPEDELPLRLPETDNIEPSGTGESPLANIEDWVNVYDENGRHGKRETNTMPQWAGSSWYWLRYTDPTNDKEFASKEALDYWSPVDLYVGGAEHAVLHLLYARFWHKVLYDLGLVPTKEPFMKLVNQGMILGSNHEKMSKSKGNVVNPDDIVDQYGADTLRLYEMFMGPLEESVPWDEKGLHGSNKWVQRVWRLLMDDNNHLRDRVSTYNDGKLTKVYNQTVKKVTDDFERMHFNTAISQLMVFVNEAYKVDDLPLEYMKGFVKMIAPLMPHLAEELWSQFNESETITYQPWPTYDEKALVEDEVEMIVQVNGKVRAKIKMAKDADNKDVEDAALANEHVHSFVDGKDVKKVIVIPNRIVNIVVK.

The 'HIGH' region signature appears at 40–51; that stretch reads PYPSGQGLHVGH. The 'KMSKS' region signature appears at 577–581; that stretch reads KMSKS. Lys-580 contacts ATP.

The protein belongs to the class-I aminoacyl-tRNA synthetase family.

It localises to the cytoplasm. The enzyme catalyses tRNA(Leu) + L-leucine + ATP = L-leucyl-tRNA(Leu) + AMP + diphosphate. The chain is Leucine--tRNA ligase from Limosilactobacillus fermentum (strain NBRC 3956 / LMG 18251) (Lactobacillus fermentum).